The sequence spans 578 residues: Trehalase (578 aa).

The first 19 residues, M1–G19, serve as a signal peptide directing secretion. N78 carries N-linked (GlcNAc...) asparagine glycosylation. Residues R168, W175–D176, N212, and R221–Q223 contribute to the substrate site. N261 carries N-linked (GlcNAc...) asparagine glycosylation. Substrate contacts are provided by residues R286–E288 and G319. Residue D321 is the Proton donor/acceptor of the active site. N-linked (GlcNAc...) asparagine glycosylation is present at N369. E514 serves as the catalytic Proton donor/acceptor. E528 contacts substrate. A lipid anchor (GPI-anchor amidated serine) is attached at S555. Positions G556–R578 are cleaved as a propeptide — removed in mature form.

Belongs to the glycosyl hydrolase 37 family. In terms of assembly, homodimer; disulfide-linked. As to expression, expressed in small intestine, kidney, and to a lesser extent in liver.

The protein localises to the cell membrane. The catalysed reaction is alpha,alpha-trehalose + H2O = alpha-D-glucose + beta-D-glucose. Functionally, intestinal trehalase is probably involved in the hydrolysis of ingested trehalose. This is Trehalase (TREH) from Oryctolagus cuniculus (Rabbit).